A 251-amino-acid chain; its full sequence is Ditrans,polycis-undecaprenyl-diphosphate synthase ((2E,6E)-farnesyl-diphosphate specific) (251 aa).

Asp-26 is an active-site residue. Residue Asp-26 participates in Mg(2+) binding. Residues 27 to 30 (GNGR), Trp-31, Arg-39, His-43, and 71 to 73 (SSE) each bind substrate. Asn-74 serves as the catalytic Proton acceptor. Substrate is bound by residues Trp-75, Arg-77, Arg-194, and 200-202 (RIS). Glu-213 contacts Mg(2+).

This sequence belongs to the UPP synthase family. As to quaternary structure, homodimer. The cofactor is Mg(2+).

It catalyses the reaction 8 isopentenyl diphosphate + (2E,6E)-farnesyl diphosphate = di-trans,octa-cis-undecaprenyl diphosphate + 8 diphosphate. Its function is as follows. Catalyzes the sequential condensation of isopentenyl diphosphate (IPP) with (2E,6E)-farnesyl diphosphate (E,E-FPP) to yield (2Z,6Z,10Z,14Z,18Z,22Z,26Z,30Z,34E,38E)-undecaprenyl diphosphate (di-trans,octa-cis-UPP). UPP is the precursor of glycosyl carrier lipid in the biosynthesis of bacterial cell wall polysaccharide components such as peptidoglycan and lipopolysaccharide. This Buchnera aphidicola subsp. Acyrthosiphon pisum (strain APS) (Acyrthosiphon pisum symbiotic bacterium) protein is Ditrans,polycis-undecaprenyl-diphosphate synthase ((2E,6E)-farnesyl-diphosphate specific).